The primary structure comprises 179 residues: Small hydrophobic protein (179 aa).

The Intravirion portion of the chain corresponds to 1 to 29 (MITLDVIKSDGSSKTCTHLKKIIKDHSGK). The chain crosses the membrane as a helical; Signal-anchor for type II membrane protein span at residues 30-50 (VLIALKLILALLTFFTITITI). At 51–179 (NYIKVENNLQ…EWKCYHHSID (129 aa)) the chain is on the virion surface side. Asn-76, Asn-121, and Asn-149 each carry an N-linked (GlcNAc...) asparagine; by host glycan.

This sequence belongs to the metapneumovirus small hydrophobic protein family. As to quaternary structure, homooligomer. Interacts with glycoprotein G.

The protein resides in the virion membrane. The protein localises to the host cell membrane. In terms of biological role, viroporin that forms a ion channel probably displaying low ion selectivity. Plays a role in counteracting host innate immunity by inhibiting TLR7/MyD88/TRAF6 signaling and STAT1 phosphorylation, leading to down-regulation of type-I IFN. The polypeptide is Small hydrophobic protein (SH) (Homo sapiens (Human)).